A 578-amino-acid polypeptide reads, in one-letter code: Interleukin-10 receptor subunit alpha (578 aa).

An N-terminal signal peptide occupies residues 1 to 21 (MLPCLVVLLAALLSLRLGSDA). Residues 22-235 (HGTELPSPPS…LTRQYFTVTN (214 aa)) lie on the Extracellular side of the membrane. Asn-50, Asn-74, Asn-110, Asn-154, Asn-177, and Asn-189 each carry an N-linked (GlcNAc...) asparagine glycan. Cysteines 56 and 75 form a disulfide. Cys-202 and Cys-223 are joined by a disulfide. Residues 236–256 (VIIFFAFVLLLSGALAYCLAL) traverse the membrane as a helical segment. Residues 257–578 (QLYVRRRKKL…PLISSLQSSE (322 aa)) are Cytoplasmic-facing. Residues 313–436 (LHGSTDSGFG…PPEPEVPGEE (124 aa)) are disordered. Positions 316–332 (STDSGFGSTKPSLQTEE) are enriched in polar residues. Residues 318–323 (DSGFGS) carry the BTRC recognition motif motif. Residues 357 to 371 (GDSCSSGSSNSTDSG) are compositionally biased toward low complexity. The segment covering 377 to 396 (PSLSPSTGPTWEQQVGSNSR) has biased composition (polar residues).

The protein belongs to the type II cytokine receptor family. In terms of assembly, interacts with IL10. Interacts with IL10RB. Interacts (via its cytoplasmic domain) with JAK1 (via N-terminus). Interacts with BTRC; this interaction leads to IL10RA ubiquitination and subsequent degradation. Interacts with STAT3. As to quaternary structure, (Microbial infection) Interacts with human cytomegalovirus protein IL10. (Microbial infection) Interacts with Epstein-Barr virus protein IL10. In terms of processing, phosphorylated. Phosphorylation of the cytoplasmic tail induced STAT3 activation. Post-translationally, ubiquitinated by BTRC; ubiquitination leads to endocytosis and subsequent degradation of IL10RA. In terms of tissue distribution, primarily expressed in hematopoetic cells including B-cells, T-cells, NK cells, monocytes and macrophages. Not expressed in non-hematopoetic cells such as fibroblasts or endothelial cells.

The protein resides in the cell membrane. It localises to the cytoplasm. Cell surface receptor for the cytokine IL10 that participates in IL10-mediated anti-inflammatory functions, limiting excessive tissue disruption caused by inflammation. Upon binding to IL10, induces a conformational change in IL10RB, allowing IL10RB to bind IL10 as well. In turn, the heterotetrameric assembly complex, composed of two subunits of IL10RA and IL10RB, activates the kinases JAK1 and TYK2 that are constitutively associated with IL10RA and IL10RB respectively. These kinases then phosphorylate specific tyrosine residues in the intracellular domain in IL10RA leading to the recruitment and subsequent phosphorylation of STAT3. Once phosphorylated, STAT3 homodimerizes, translocates to the nucleus and activates the expression of anti-inflammatory genes. In addition, IL10RA-mediated activation of STAT3 inhibits starvation-induced autophagy. The protein is Interleukin-10 receptor subunit alpha (IL10RA) of Homo sapiens (Human).